Consider the following 213-residue polypeptide: Large ribosomal subunit protein uL1 (213 aa).

It belongs to the universal ribosomal protein uL1 family. In terms of assembly, part of the 50S ribosomal subunit.

Functionally, binds directly to 23S rRNA. Probably involved in E site tRNA release. In terms of biological role, protein L1 is also a translational repressor protein, it controls the translation of its operon by binding to its mRNA. The polypeptide is Large ribosomal subunit protein uL1 (Methanosarcina mazei (strain ATCC BAA-159 / DSM 3647 / Goe1 / Go1 / JCM 11833 / OCM 88) (Methanosarcina frisia)).